The following is a 207-amino-acid chain: Ribosome maturation factor RimM (207 aa).

Residues 114-207 (DDEYYWVDLI…RIDSDWPLDY (94 aa)) form the PRC barrel domain.

The protein belongs to the RimM family. In terms of assembly, binds ribosomal protein uS19.

It is found in the cytoplasm. In terms of biological role, an accessory protein needed during the final step in the assembly of 30S ribosomal subunit, possibly for assembly of the head region. Essential for efficient processing of 16S rRNA. May be needed both before and after RbfA during the maturation of 16S rRNA. It has affinity for free ribosomal 30S subunits but not for 70S ribosomes. This Bordetella bronchiseptica (strain ATCC BAA-588 / NCTC 13252 / RB50) (Alcaligenes bronchisepticus) protein is Ribosome maturation factor RimM.